The primary structure comprises 96 residues: Small ribosomal subunit protein bS6 (96 aa).

This sequence belongs to the bacterial ribosomal protein bS6 family.

Functionally, binds together with bS18 to 16S ribosomal RNA. In Streptococcus pneumoniae serotype 2 (strain D39 / NCTC 7466), this protein is Small ribosomal subunit protein bS6.